The primary structure comprises 168 residues: Venom nerve growth factor (168 aa).

The first 18 residues, 1 to 18 (MSMLCYTLIIAFLIGIWA), serve as a signal peptide directing secretion. A propeptide spanning residues 19–123 (APKSEDNVSL…ADSLNRNIRA (105 aa)) is cleaved from the precursor. A glycan (N-linked (GlcNAc...) asparagine) is linked at N25. The interval 48–70 (LKTSQNTDQHSPAPKKAEDQEFG) is disordered. N-linked (GlcNAc...) asparagine glycosylation is present at N148.

This sequence belongs to the NGF-beta family. In terms of assembly, homodimer; non-covalently linked. As to expression, expressed by the venom gland.

It localises to the secreted. Nerve growth factor is important for the development and maintenance of the sympathetic and sensory nervous systems. It stimulates division and differentiation of sympathetic and embryonic sensory neurons as well as basal forebrain cholinergic neurons in the brain. Its relevance in the snake venom is not clear. However, it has been shown to inhibit metalloproteinase-dependent proteolysis of platelet glycoprotein Ib alpha, suggesting a metalloproteinase inhibition to prevent metalloprotease autodigestion and/or protection against prey proteases. The protein is Venom nerve growth factor of Echis ocellatus (Ocellated saw-scaled viper).